The primary structure comprises 289 residues: Iron-sulfur cluster carrier protein (289 aa).

A compositionally biased stretch (low complexity) spans 1 to 18 (MAEECSGNCDSCGSSSDC). The segment at 1–20 (MAEECSGNCDSCGSSSDCSD) is disordered. ATP is bound at residue 48 to 55 (GKGGVGKS).

It belongs to the Mrp/NBP35 ATP-binding proteins family. As to quaternary structure, homodimer.

Its function is as follows. Binds and transfers iron-sulfur (Fe-S) clusters to target apoproteins. Can hydrolyze ATP. The chain is Iron-sulfur cluster carrier protein from Methanococcus maripaludis (strain DSM 14266 / JCM 13030 / NBRC 101832 / S2 / LL).